The sequence spans 419 residues: Menaquinone reductase, integral membrane subunit (419 aa).

10 helical membrane-spanning segments follow: residues 23–43 (LSKF…GLYA), 61–81 (FGFG…AGAF), 98–118 (IINL…LVLV), 143–163 (VIFC…PLIL), 176–196 (AVAH…AFLS), 221–241 (FFIW…SGPV), 270–290 (IAGT…YAWA), 316–336 (LWAE…VPAL), 341–361 (VLFY…RYVM), and 383–403 (WAEW…LSLS).

It belongs to the NrfD family. The Qrc complex is composed of four subunits: QrcA, QrcB, QrcC and QrcD. Can form a supercomplex with the [NiFe] hydrogenase HynA1 and the tetraheme Type I cytochrome c3 TpIc(3), its physiological electron donors.

It is found in the cell inner membrane. Functionally, component of the respiratory Qrc complex, that catalyzes the reduction of the menaquinone pool using electrons transferred from the reduced periplasmic cytochrome c3, and which is probably involved in sulfate respiration. Is likely essential for growth on H(2) or formate since the periplasmic hydrogenases and/or formate dehydrogenases act as primary electron donors for the Qrc complex. The QrcD subunit anchors the protein complex to the membrane and likely interacts with the quinone pool. The sequence is that of Menaquinone reductase, integral membrane subunit from Nitratidesulfovibrio vulgaris (strain ATCC 29579 / DSM 644 / CCUG 34227 / NCIMB 8303 / VKM B-1760 / Hildenborough) (Desulfovibrio vulgaris).